A 461-amino-acid polypeptide reads, in one-letter code: E3 ubiquitin-protein ligase parkin (461 aa).

The 61-residue stretch at 30-90 (VNIYVKSNVG…DSTVIEVLDF (61 aa)) folds into the Ubiquitin-like domain. Position 92 is a phosphoserine (Ser-92). Residues 145–227 (AHFFIYCANP…SQGENDTAVP (83 aa)) form an RING-type 0; atypical zinc finger. 4 residues coordinate Zn(2+): Cys-151, Cys-155, Cys-167, and Cys-170. Phosphothreonine is present on Thr-176. Cys-197, Cys-202, Cys-213, His-216, Cys-240, Cys-243, Cys-255, His-259, Cys-262, Cys-265, Cys-291, Cys-295, Cys-334, Cys-339, Cys-354, Cys-356, Cys-361, Cys-364, His-369, Cys-373, Cys-415, and Cys-418 together coordinate Zn(2+). A TRIAD supradomain region spans residues 236 to 461 (KKIPCLACTD…RDCMASHWFG (226 aa)). The RING-type 1 zinc-finger motif lies at 240–295 (CLACTDICDPVLVFSCDNRHVTCLECFKNYCGSRLKDRQFLSHPDFGYTLPCPAGC). 2 consecutive IBR-type zinc fingers follow at residues 315–373 (EQYH…LGEC) and 411–452 (LTKP…PWER). The RING-type 2; atypical zinc-finger motif lies at 415 to 446 (CPKCRTSTERAGGCMHMICTRANCGFHWCWVC). Residue Cys-428 is part of the active site. Zn(2+) is bound by residues Cys-433, Cys-438, Cys-443, Cys-446, Cys-454, and His-458.

The protein belongs to the RBR family. Parkin subfamily. As to quaternary structure, forms an E3 ubiquitin ligase complex with E2 ubiquitin-conjugating enzymes. Post-translationally, auto-ubiquitinates in an E2-dependent manner leading to its own degradation. Phosphorylated. Activation requires phosphorylation at Ser-92 by Pink1 and binding to Pink1-phosphorylated polyubiquitin chains. Phosphorylation at Thr-176 by Pink1 is also important for mitochondrial localization.

The protein resides in the mitochondrion. Its subcellular location is the cytoplasm. It is found in the cytosol. The catalysed reaction is [E2 ubiquitin-conjugating enzyme]-S-ubiquitinyl-L-cysteine + [acceptor protein]-L-lysine = [E2 ubiquitin-conjugating enzyme]-L-cysteine + [acceptor protein]-N(6)-ubiquitinyl-L-lysine.. The protein operates within protein modification; protein ubiquitination. Its activity is regulated as follows. In the autoinhibited state the side chain of Phe-460 inserts into a hydrophobic groove in RING-0, occluding the ubiquitin acceptor site Cys-428, whereas the REP repressor element binds RING-1 and blocks its E2-binding site. Activation of park requires 2 steps: (1) phosphorylation at Ser-92 by Pink1 and (2) binding to phosphorylated ubiquitin, leading to unlock repression of the catalytic Cys-428 by the RING-0 region via an allosteric mechanism and converting park to its fully-active form. According to another report, phosphorylation at Ser-92 by Pink1 is not essential for activation and only binding to phosphorylated ubiquitin is essential to unlock repression. In terms of biological role, E3 ubiquitin-protein ligase which accepts ubiquitin from E2 ubiquitin-conjugating enzymes in the form of a thioester and then directly transfers the ubiquitin to targeted substrates, such as Marf, Opa1, Sep1, Tom20 and porin. Mediates monoubiquitination as well as 'Lys-6', 'Lys-11', 'Lys-48'-linked and 'Lys-63'-linked polyubiquitination of substrates, depending on the context. Protects against mitochondrial dysfunction during cellular stress, by acting downstream of Pink1, to coordinate mitochondrial quality control mechanisms that remove and replace dysfunctional mitochondrial components. Depending on the severity of mitochondrial damage and/or dysfunction, activity ranges from preventing apoptosis and stimulating mitochondrial biogenesis to regulating mitochondrial dynamics and eliminating severely damaged mitochondria via mitophagy. Appears to be particularly important in maintaining the physiology and function of cells with high energy demands that are undergoing stress or altered metabolic environment, including spermatids, muscle cells and neurons such as the dopaminergic (DA) neurons. Activation and recruitment onto the outer membrane of damaged/dysfunctional mitochondria (OMM) requires Pink1-mediated phosphorylation of both park and ubiquitin. In depolarized mitochondria, mediates the decision between mitophagy or preventing apoptosis by inducing either the poly- or monoubiquitination of porin/VDAC; polyubiquitination of porin promotes mitophagy, while monoubiquitination of porin decreases mitochondrial calcium influx which ultimately inhibits apoptosis. When cellular stress results in irreversible mitochondrial damage, promotes the autophagic degradation of dysfunctional depolarized mitochondria (mitophagy) by promoting the ubiquitination of mitochondrial proteins. Preferentially assembles 'Lys-6'-, 'Lys-11'- and 'Lys-63'-linked polyubiquitin chains following mitochondrial damage, leading to mitophagy. In developing tissues, inhibits JNK-mediated apoptosis by negatively regulating bsk transcription. The Pink1-park pathway also promotes fission and/or inhibits fusion of damaged mitochondria by mediating the ubiquitination and subsequent degradation of proteins involved in mitochondrial fusion/fission such as Marf and Opa1. This prevents the refusion of unhealthy mitochondria with the healthy mitochondrial network and/or initiates mitochondrial fragmentation facilitating their later engulfment by autophagosomes. Regulates motility of damaged mitochondria by phosphorylating Miro which likely promotes its park-dependent degradation by the proteasome; in motor neurons, this inhibits mitochondrial intracellular anterograde transport along the axons which probably increases the chance of the mitochondria being eliminated in the soma. The Pink1-park pathway is also involved in mitochondrial regeneration processes such as promoting mitochondrial biogenesis, activating localized mitochondrial repair, promoting selective turnover of mitochondrial proteins and initiating the mitochondrial import of endogenous proteins. Involved in mitochondrial biogenesis via the ubiquitination of transcriptional repressor Paris which leads to its subsequent proteasomal degradation and allows activation of the transcription factor srl. Promotes localized mitochondrial repair by activating the translation of specific nuclear-encoded mitochondrial RNAs (nc-mtRNAs) on the mitochondrial surface, including several key electron transport chain component nc-mtRNAs. The chain is E3 ubiquitin-protein ligase parkin from Pediculus humanus subsp. corporis (Body louse).